Here is a 234-residue protein sequence, read N- to C-terminus: Large ribosomal subunit protein uL1 (234 aa).

The protein belongs to the universal ribosomal protein uL1 family. Part of the 50S ribosomal subunit.

Functionally, binds directly to 23S rRNA. The L1 stalk is quite mobile in the ribosome, and is involved in E site tRNA release. In terms of biological role, protein L1 is also a translational repressor protein, it controls the translation of the L11 operon by binding to its mRNA. The protein is Large ribosomal subunit protein uL1 of Anaeromyxobacter sp. (strain Fw109-5).